The primary structure comprises 95 residues: Small ribosomal subunit protein bS6 (95 aa).

The protein belongs to the bacterial ribosomal protein bS6 family.

Functionally, binds together with bS18 to 16S ribosomal RNA. This Geobacillus sp. (strain WCH70) protein is Small ribosomal subunit protein bS6.